The sequence spans 145 residues: MRLVVAAVGRVKDKPLRAAMDEYLGRIRRYVACDEIEIQDGPPAKVGPLLARASAGASVIAMEVGGKALGSEAFAAGVERWGSRGKGVVAFLIGGADGLPPDVSAAADDRWSLSPLTFPHRLARLVLIEQLYRAMTLLRGEPYAH.

S-adenosyl-L-methionine contacts are provided by residues Gly94 and 113–118 (LSPLTF).

It belongs to the RNA methyltransferase RlmH family. Homodimer.

The protein resides in the cytoplasm. It carries out the reaction pseudouridine(1915) in 23S rRNA + S-adenosyl-L-methionine = N(3)-methylpseudouridine(1915) in 23S rRNA + S-adenosyl-L-homocysteine + H(+). Specifically methylates the pseudouridine at position 1915 (m3Psi1915) in 23S rRNA. This chain is Ribosomal RNA large subunit methyltransferase H, found in Sorangium cellulosum (strain So ce56) (Polyangium cellulosum (strain So ce56)).